Here is a 396-residue protein sequence, read N- to C-terminus: Probable mannan endo-1,4-beta-mannosidase A-2 (396 aa).

Residues 1 to 21 form the signal peptide; sequence MKVPRLLLALGGLASIHIASA. Residue Trp99 coordinates substrate. Asn120 is a glycosylation site (N-linked (GlcNAc...) asparagine). A substrate-binding site is contributed by Asn212. Catalysis depends on Glu213, which acts as the Proton donor. N-linked (GlcNAc...) asparagine glycosylation is present at Asn270. Position 288 (Tyr288) interacts with substrate. Glu321 functions as the Nucleophile in the catalytic mechanism. Trp351 serves as a coordination point for substrate.

Belongs to the glycosyl hydrolase 5 (cellulase A) family.

The protein localises to the secreted. The catalysed reaction is Random hydrolysis of (1-&gt;4)-beta-D-mannosidic linkages in mannans, galactomannans and glucomannans.. Functionally, endo-1,4-mannanase, a crucial enzyme for depolymerization of seed galactomannans and wood galactoglucomannans. The chain is Probable mannan endo-1,4-beta-mannosidase A-2 (manA-2) from Aspergillus terreus (strain NIH 2624 / FGSC A1156).